Consider the following 220-residue polypeptide: Germin-like protein subfamily 2 member 4 (220 aa).

Residues 1–21 (MDSRCFGFFFTLLSLNVIVLA) form the signal peptide. Residues Cys31 and Cys46 are joined by a disulfide bond. N-linked (GlcNAc...) asparagine glycans are attached at residues Asn51 and Asn69. The Cupin type-1 domain occupies 58–209 (FFAGIGKPAV…TFQIGTKEIE (152 aa)). Mn(2+)-binding residues include His108, His110, Glu115, and His154.

Belongs to the germin family. Oligomer (believed to be a pentamer but probably hexamer).

Its subcellular location is the secreted. It is found in the extracellular space. The protein resides in the apoplast. Functionally, may play a role in plant defense. Probably has no oxalate oxidase activity even if the active site is conserved. This is Germin-like protein subfamily 2 member 4 (GLP10) from Arabidopsis thaliana (Mouse-ear cress).